We begin with the raw amino-acid sequence, 342 residues long: Probable dual-specificity RNA methyltransferase RlmN (342 aa).

The Proton acceptor role is filled by Glu91. The 231-residue stretch at 97–327 (YKHGNSICVS…TTIRREMGAD (231 aa)) folds into the Radical SAM core domain. The cysteines at positions 104 and 332 are disulfide-linked. 3 residues coordinate [4Fe-4S] cluster: Cys111, Cys115, and Cys118. S-adenosyl-L-methionine is bound by residues 158 to 159 (GE), Ser190, 213 to 215 (SLH), and Asn289. Catalysis depends on Cys332, which acts as the S-methylcysteine intermediate.

It belongs to the radical SAM superfamily. RlmN family. Requires [4Fe-4S] cluster as cofactor.

It is found in the cytoplasm. It catalyses the reaction adenosine(2503) in 23S rRNA + 2 reduced [2Fe-2S]-[ferredoxin] + 2 S-adenosyl-L-methionine = 2-methyladenosine(2503) in 23S rRNA + 5'-deoxyadenosine + L-methionine + 2 oxidized [2Fe-2S]-[ferredoxin] + S-adenosyl-L-homocysteine. The catalysed reaction is adenosine(37) in tRNA + 2 reduced [2Fe-2S]-[ferredoxin] + 2 S-adenosyl-L-methionine = 2-methyladenosine(37) in tRNA + 5'-deoxyadenosine + L-methionine + 2 oxidized [2Fe-2S]-[ferredoxin] + S-adenosyl-L-homocysteine. Functionally, specifically methylates position 2 of adenine 2503 in 23S rRNA and position 2 of adenine 37 in tRNAs. This Clostridium botulinum (strain Langeland / NCTC 10281 / Type F) protein is Probable dual-specificity RNA methyltransferase RlmN.